A 545-amino-acid chain; its full sequence is Chaperonin GroEL (545 aa).

ATP is bound by residues 30–33, K51, 87–91, G415, and D494; these read TMGP and DGTTT.

It belongs to the chaperonin (HSP60) family. As to quaternary structure, forms a cylinder of 14 subunits composed of two heptameric rings stacked back-to-back. Interacts with the co-chaperonin GroES.

The protein resides in the cytoplasm. It catalyses the reaction ATP + H2O + a folded polypeptide = ADP + phosphate + an unfolded polypeptide.. Functionally, together with its co-chaperonin GroES, plays an essential role in assisting protein folding. The GroEL-GroES system forms a nano-cage that allows encapsulation of the non-native substrate proteins and provides a physical environment optimized to promote and accelerate protein folding. This Helicobacter hepaticus (strain ATCC 51449 / 3B1) protein is Chaperonin GroEL.